Here is a 174-residue protein sequence, read N- to C-terminus: MTRILGIDPGSQRTGIGIIDIDEGGRSRHVHHAPLILLGEGDFSQRLKRLLHGLGELIETYRPDEVAIEKVFMGKSAASALKLGQARGAAICAVVMRDLPVHEYAATEVKLALVGKGGADKLQVQHMVGIMLNLKGKLQPDAADALAVAITHAHVRATAQCLGVNTQQAWSRKK.

Residues Asp-8, Glu-69, and Asp-141 contribute to the active site. The Mg(2+) site is built by Asp-8, Glu-69, and Asp-141.

It belongs to the RuvC family. Homodimer which binds Holliday junction (HJ) DNA. The HJ becomes 2-fold symmetrical on binding to RuvC with unstacked arms; it has a different conformation from HJ DNA in complex with RuvA. In the full resolvosome a probable DNA-RuvA(4)-RuvB(12)-RuvC(2) complex forms which resolves the HJ. Mg(2+) is required as a cofactor.

Its subcellular location is the cytoplasm. It carries out the reaction Endonucleolytic cleavage at a junction such as a reciprocal single-stranded crossover between two homologous DNA duplexes (Holliday junction).. The RuvA-RuvB-RuvC complex processes Holliday junction (HJ) DNA during genetic recombination and DNA repair. Endonuclease that resolves HJ intermediates. Cleaves cruciform DNA by making single-stranded nicks across the HJ at symmetrical positions within the homologous arms, yielding a 5'-phosphate and a 3'-hydroxyl group; requires a central core of homology in the junction. The consensus cleavage sequence is 5'-(A/T)TT(C/G)-3'. Cleavage occurs on the 3'-side of the TT dinucleotide at the point of strand exchange. HJ branch migration catalyzed by RuvA-RuvB allows RuvC to scan DNA until it finds its consensus sequence, where it cleaves and resolves the cruciform DNA. The sequence is that of Crossover junction endodeoxyribonuclease RuvC from Xanthomonas oryzae pv. oryzae (strain MAFF 311018).